The sequence spans 90 residues: Keratin-associated protein 19-1 (90 aa).

Positions 5-84 (GSYYGGLGYS…CCRPSYNGGY (80 aa)) are 26 X 2 AA repeats of G-[YCGS].

This sequence belongs to the KRTAP type 19 family. In terms of assembly, interacts with hair keratins. In terms of tissue distribution, detected in the upper portion of the hair cortex.

Its function is as follows. In the hair cortex, hair keratin intermediate filaments are embedded in an interfilamentous matrix, consisting of hair keratin-associated proteins (KRTAP), which are essential for the formation of a rigid and resistant hair shaft through their extensive disulfide bond cross-linking with abundant cysteine residues of hair keratins. The matrix proteins include the high-sulfur and high-glycine-tyrosine keratins. In Homo sapiens (Human), this protein is Keratin-associated protein 19-1 (KRTAP19-1).